The following is a 108-amino-acid chain: MNKARKTYVLKLYVAGNTPNSVRALKTLKNILEQEFQGIYALKVIDVLKNPQLAEEDKILATPTLSKILPPPVRKIIGDLSDRERVLIGLDLLYEELTEEDWEAQSNL.

This sequence belongs to the KaiB family. In terms of assembly, homodimer, interacts with KaiC. The KaiABC complex composition changes during the circadian cycle to control KaiC phosphorylation. Complexes KaiC(6), KaiA(2-4):KaiC(6), KaiB(6):KaiC(6) and KaiC(6):KaiB(6):KaiA(12) are among the most important forms, many form cooperatively. Undergoes a major conformational rearrangment; in the free state forms homotetramers as a dimer of dimers. When bound to the CI domain of KaiC switches to a monomeric thioredoxin-fold (KaiB(fs)). KaiB(fs) binds CikA, leading it to dephosphorylate phospho-RpaA.

Key component of the KaiABC oscillator complex, which constitutes the main circadian regulator in cyanobacteria. Complex composition changes during the circadian cycle to control KaiC phosphorylation. KaiA stimulates KaiC autophosphorylation, while KaiB sequesters KaiA, leading to KaiC autodephosphorylation. Phospho-Ser-431 KaiC accumulation triggers binding of KaiB to form the KaiB(6):KaiC(6) complex, leading to changes in output regulators CikA and SasA. KaiB switches to a thioredoxin-like fold (KaiB(fs)) when bound to KaiC. KaiB(6):KaiC(6) formation exposes a site for KaiA binding that sequesters KaiA from KaiC, making the KaiC(6):KaiB(6):KaiA(12) complex that results in KaiC autodephosphorylation. In terms of biological role, a metamorphic protein which reversibly switches between an inactive tetrameric fold and a rare, thioredoxin-like monomeric fold (KaiB(fs)). KaiB(fs) binds phospho-KaiC, KaiA and CikA. KaiA and CikA compete for binding to KaiB(fs), and KaiB(fs) and SasA compete for binding to KaiC, thus the clock oscillator and output signal pathway are tightly coupled. This is Circadian clock oscillator protein KaiB from Nostoc sp. (strain PCC 7120 / SAG 25.82 / UTEX 2576).